Reading from the N-terminus, the 160-residue chain is Large ribosomal subunit protein uL16 (160 aa).

The tract at residues 138 to 160 (INLSSDSSGEGKTGKDSKEEVKK) is disordered. Residues 149 to 160 (KTGKDSKEEVKK) show a composition bias toward basic and acidic residues.

The protein belongs to the universal ribosomal protein uL16 family. Part of the 50S ribosomal subunit.

In terms of biological role, binds 23S rRNA and is also seen to make contacts with the A and possibly P site tRNAs. The polypeptide is Large ribosomal subunit protein uL16 (Prochlorococcus marinus subsp. pastoris (strain CCMP1986 / NIES-2087 / MED4)).